The sequence spans 129 residues: NADH dehydrogenase [ubiquinone] 1 beta subcomplex subunit 4 (129 aa).

At serine 2 the chain carries N-acetylserine. Serine 26 is subject to Phosphoserine. The helical transmembrane segment at 88-105 (LMGALCGFGPLIFIYYII) threads the bilayer.

The protein belongs to the complex I NDUFB4 subunit family. As to quaternary structure, complex I is composed of 45 different subunits.

Its subcellular location is the mitochondrion inner membrane. Its function is as follows. Accessory subunit of the mitochondrial membrane respiratory chain NADH dehydrogenase (Complex I), that is believed not to be involved in catalysis. Complex I functions in the transfer of electrons from NADH to the respiratory chain. The immediate electron acceptor for the enzyme is believed to be ubiquinone. This chain is NADH dehydrogenase [ubiquinone] 1 beta subcomplex subunit 4 (NDUFB4), found in Gorilla gorilla gorilla (Western lowland gorilla).